A 342-amino-acid polypeptide reads, in one-letter code: Anthranilate phosphoribosyltransferase (342 aa).

5-phospho-alpha-D-ribose 1-diphosphate contacts are provided by residues Gly-84, 87–88 (GD), Thr-92, 94–97 (NIST), 112–120 (KHGGRSVSS), and Ser-124. Gly-84 contributes to the anthranilate binding site. Ser-96 is a binding site for Mg(2+). An anthranilate-binding site is contributed by Arg-170. Asp-229 and Glu-230 together coordinate Mg(2+).

The protein belongs to the anthranilate phosphoribosyltransferase family. As to quaternary structure, homodimer. The cofactor is Mg(2+).

The catalysed reaction is N-(5-phospho-beta-D-ribosyl)anthranilate + diphosphate = 5-phospho-alpha-D-ribose 1-diphosphate + anthranilate. Its pathway is amino-acid biosynthesis; L-tryptophan biosynthesis; L-tryptophan from chorismate: step 2/5. In terms of biological role, catalyzes the transfer of the phosphoribosyl group of 5-phosphorylribose-1-pyrophosphate (PRPP) to anthranilate to yield N-(5'-phosphoribosyl)-anthranilate (PRA). The sequence is that of Anthranilate phosphoribosyltransferase from Verminephrobacter eiseniae (strain EF01-2).